Reading from the N-terminus, the 260-residue chain is MGFLKGKKFLIIGISSVRSIAFGIAKSLYNQKAELGFVCQNEKIRKKIKKLVEPMKSCIVLCCDVSNDKNIKKLFIDLGQVWKKFDGLVHAIAYCPKQYFNGDFIDNITREGFNISHEISSYSFIGLVKACRTMLNNFSSLLTLSYLGSQRVVPNYNVMGLAKASLEASVRYMASSLGKENIRVNAISSSPIKTISSYKITNFNKIRNCSYASSFLKNSVTSENIGNVASFLLSDLSLGITGSVIYVDNGFNVSSMNNIQ.

Residues Gly13, 19–20 (SI), Gln40, 64–65 (DV), and Ile92 each bind NAD(+). Residues Tyr146 and Tyr156 each act as proton acceptor in the active site. NAD(+)-binding positions include Lys163 and 192–196 (IKTIS).

Belongs to the short-chain dehydrogenases/reductases (SDR) family. FabI subfamily. In terms of assembly, homotetramer.

The enzyme catalyses a 2,3-saturated acyl-[ACP] + NAD(+) = a (2E)-enoyl-[ACP] + NADH + H(+). It participates in lipid metabolism; fatty acid biosynthesis. Its pathway is cofactor biosynthesis; biotin biosynthesis. Functionally, catalyzes the reduction of a carbon-carbon double bond in an enoyl moiety that is covalently linked to an acyl carrier protein (ACP). Involved in the elongation cycle of fatty acid which are used in the lipid metabolism and in the biotin biosynthesis. This is Enoyl-[acyl-carrier-protein] reductase [NADH] FabI (fabI) from Buchnera aphidicola subsp. Acyrthosiphon pisum (strain APS) (Acyrthosiphon pisum symbiotic bacterium).